A 296-amino-acid polypeptide reads, in one-letter code: Non-selective voltage-gated ion channel VDAC2 (296 aa).

Lys25 contacts ATP. Lys25 is covalently cross-linked (Glycyl lysine isopeptide (Lys-Gly) (interchain with G-Cter in ubiquitin)). Residue Ser26 is modified to Phosphoserine. Lys33 contacts ATP. Lys33 is subject to N6-acetyllysine; alternate. N6-succinyllysine; alternate is present on Lys33. Lys33 is covalently cross-linked (Glycyl lysine isopeptide (Lys-Gly) (interchain with G-Cter in ubiquitin); alternate). The next 2 beta stranded transmembrane spans lie at 39 to 48 (LVKLDVKTKS) and 52 to 60 (VEFTTSGSS). Residues Lys66 and Lys74 each participate in a glycyl lysine isopeptide (Lys-Gly) (interchain with G-Cter in ubiquitin) cross-link. A beta stranded transmembrane segment spans residues 67 to 77 (VNGSLETKYKW). At Tyr80 the chain carries Phosphotyrosine. 3 beta stranded membrane passes run 82–89 (LTFTEKWN), 93–102 (TLGTEIAIED), and 108–117 (LKLTFDTTFS). Position 120 is a phosphothreonine (Thr120). The residue at position 122 (Lys122) is an N6-acetyllysine; alternate. Lys122 participates in a covalent cross-link: Glycyl lysine isopeptide (Lys-Gly) (interchain with G-Cter in ubiquitin); alternate. A Glycyl lysine isopeptide (Lys-Gly) (interchain with G-Cter in ubiquitin) cross-link involves residue Lys123. 4 beta stranded membrane passes run 124–133 (SGKIKSAYKR), 136–143 (LNLGCDVD), 150–158 (AIHGSAVFG), and 163–171 (LAGYQMTFD). Lys174 participates in a covalent cross-link: Glycyl lysine isopeptide (Lys-Gly) (interchain with G-Cter in ubiquitin). Beta stranded transmembrane passes span 176 to 188 (KLTR…GYKT), 191 to 198 (FQLHTNVN), 202 to 211 (EFGGSIYQKV), 215 to 224 (LETAVNLAWT), 231 to 240 (RFGIAAKYKL), and 244 to 251 (ASISAKVN). At Ser206 the chain carries Phosphoserine. Position 253 is a phosphoserine (Ser253). NAD(+)-binding positions include 255–257 (LVG) and 273–277 (SALID). Beta stranded transmembrane passes span 255–264 (LVGVGYTQTL) and 267–276 (GVKLTLSALI). Position 279 is an N6-acetyllysine; alternate (Lys279). Lys279 is covalently cross-linked (Glycyl lysine isopeptide (Lys-Gly) (interchain with G-Cter in ubiquitin); alternate). The beta stranded transmembrane segment at 286–295 (HKLGLGLELE) threads the bilayer. Lys287 is covalently cross-linked (Glycyl lysine isopeptide (Lys-Gly) (interchain with G-Cter in ubiquitin)).

The protein belongs to the eukaryotic mitochondrial porin family. Monomer, homodimer and higher order oligomers; formation of higher order structures is necessary for scramblase activity. Ubiquitinated by PRKN during mitophagy, leading to its degradation and enhancement of mitophagy. Deubiquitinated by USP30.

The protein localises to the mitochondrion outer membrane. It is found in the membrane. The catalysed reaction is chloride(in) = chloride(out). The enzyme catalyses K(+)(in) = K(+)(out). It carries out the reaction a 1,2-diacyl-sn-glycero-3-phospho-L-serine(in) = a 1,2-diacyl-sn-glycero-3-phospho-L-serine(out). It catalyses the reaction a 1,2-diacyl-sn-glycero-3-phosphocholine(in) = a 1,2-diacyl-sn-glycero-3-phosphocholine(out). The catalysed reaction is a 1,2-diacyl-sn-glycero-3-phospho-(1D-myo-inositol)(in) = a 1,2-diacyl-sn-glycero-3-phospho-(1D-myo-inositol)(out). Non-selective voltage-gated ion channel that mediates the transport of anions and cations through the mitochondrion outer membrane and plasma membrane. The channel adopts an open conformation at zero mV and a closed conformation at both positive and negative potentials. There are two populations of channels; the main that functions in a lower open-state conductance with lower ion selectivity, that switch, in a voltage-dependent manner, from the open to a low-conducting 'closed' state and the other that has a normal ion selectivity in the typical high conductance, 'open' state. Binds various lipids, including the sphingolipid ceramide, the phospholipid phosphatidylcholine, and the sterols cholesterol and oxysterol. Binding of ceramide promotes the mitochondrial outer membrane permeabilization (MOMP) apoptotic pathway. In terms of biological role, catalyzes the scrambling of phospholipids across the outer mitochondrial membrane; the mechanism is unrelated to channel activity and is capable of translocating both anionic and zwitterionic phospholipids. The protein is Non-selective voltage-gated ion channel VDAC2 of Meleagris gallopavo (Wild turkey).